Reading from the N-terminus, the 220-residue chain is Uracil-DNA glycosylase 1 (220 aa).

Catalysis depends on Asp65, which acts as the Proton acceptor.

Belongs to the uracil-DNA glycosylase (UDG) superfamily. UNG family.

It is found in the cytoplasm. It catalyses the reaction Hydrolyzes single-stranded DNA or mismatched double-stranded DNA and polynucleotides, releasing free uracil.. Its function is as follows. Excises uracil residues from the DNA which can arise as a result of misincorporation of dUMP residues by DNA polymerase or due to deamination of cytosine. The sequence is that of Uracil-DNA glycosylase 1 from Bacteroides fragilis (strain YCH46).